A 96-amino-acid polypeptide reads, in one-letter code: Putative regulatory protein Teth514_1762 (96 aa).

It belongs to the RemA family.

This Thermoanaerobacter sp. (strain X514) protein is Putative regulatory protein Teth514_1762.